Reading from the N-terminus, the 182-residue chain is uncharacterized protein (182 aa).

Helical transmembrane passes span 29–49 and 63–83; these read IISG…AGLP and FYFP…MLTL.

The protein resides in the cell membrane. This is an uncharacterized protein from Ureaplasma parvum serovar 3 (strain ATCC 700970).